The sequence spans 154 residues: Small ribosomal subunit protein uS9 (154 aa).

A disordered region spans residues 133 to 154; the sequence is RAKESKKYGLKKARKAPQYSKR. The segment covering 140–154 has biased composition (basic residues); it reads YGLKKARKAPQYSKR.

The protein belongs to the universal ribosomal protein uS9 family.

In Salinispora tropica (strain ATCC BAA-916 / DSM 44818 / JCM 13857 / NBRC 105044 / CNB-440), this protein is Small ribosomal subunit protein uS9.